Reading from the N-terminus, the 219-residue chain is Cytidylate kinase (219 aa).

An ATP-binding site is contributed by 15–23 (GPAASGKGT).

The protein belongs to the cytidylate kinase family. Type 1 subfamily.

The protein resides in the cytoplasm. It carries out the reaction CMP + ATP = CDP + ADP. The catalysed reaction is dCMP + ATP = dCDP + ADP. This chain is Cytidylate kinase, found in Brucella suis biovar 1 (strain 1330).